We begin with the raw amino-acid sequence, 515 residues long: 2-isopropylmalate synthase (515 aa).

Residues 5-267 enclose the Pyruvate carboxyltransferase domain; the sequence is VIIFDTTLRD…STGIKHEEIH (263 aa). Mn(2+)-binding residues include aspartate 14, histidine 202, histidine 204, and asparagine 238. Residues 392 to 515 are regulatory domain; it reads KLNYLSVQSG…EMKQKKIATV (124 aa).

The protein belongs to the alpha-IPM synthase/homocitrate synthase family. LeuA type 1 subfamily. Homodimer. Requires Mn(2+) as cofactor.

The protein localises to the cytoplasm. It carries out the reaction 3-methyl-2-oxobutanoate + acetyl-CoA + H2O = (2S)-2-isopropylmalate + CoA + H(+). It functions in the pathway amino-acid biosynthesis; L-leucine biosynthesis; L-leucine from 3-methyl-2-oxobutanoate: step 1/4. Its function is as follows. Catalyzes the condensation of the acetyl group of acetyl-CoA with 3-methyl-2-oxobutanoate (2-ketoisovalerate) to form 3-carboxy-3-hydroxy-4-methylpentanoate (2-isopropylmalate). This chain is 2-isopropylmalate synthase, found in Vibrio parahaemolyticus serotype O3:K6 (strain RIMD 2210633).